Reading from the N-terminus, the 507-residue chain is Serine/threonine-protein kinase BSK11 (507 aa).

A lipid anchor (N-myristoyl glycine) is attached at glycine 2. Residues 16–26 (DKKITSDDLSG) are compositionally biased toward basic and acidic residues. The segment at 16 to 44 (DKKITSDDLSGRRGKGAKRGNRHRHANIN) is disordered. A compositionally biased stretch (basic residues) spans 27–41 (RRGKGAKRGNRHRHA). Residues 75 to 332 (NAVVSVCSDQ…GDIISVITTL (258 aa)) enclose the Protein kinase domain. ATP-binding positions include 81–89 (CSDQEPNLV) and lysine 106. Aspartate 200 acts as the Proton acceptor in catalysis.

It belongs to the protein kinase superfamily. Ser/Thr protein kinase family. In terms of assembly, interacts with BRI1, ASK7/BIN2, BSK1, BSK6 and BSK8. Phosphorylated by BRI1, ASK7/BIN2 and ASK9/BIL2.

It localises to the cell membrane. It catalyses the reaction L-seryl-[protein] + ATP = O-phospho-L-seryl-[protein] + ADP + H(+). The enzyme catalyses L-threonyl-[protein] + ATP = O-phospho-L-threonyl-[protein] + ADP + H(+). Functionally, probable serine/threonine kinase that acts as a positive regulator of brassinosteroid (BR) signaling downstream of the receptor kinase BRI1. This Arabidopsis thaliana (Mouse-ear cress) protein is Serine/threonine-protein kinase BSK11.